The sequence spans 149 residues: Transcriptional repressor NrdR (149 aa).

A zinc finger spans residues 3 to 34 (CPFCGNRDTNVRDSRSVNEGTFIKRRRFCGEC). The 91-residue stretch at 49–139 (IKVIKKNGSC…VYMNFENEKD (91 aa)) folds into the ATP-cone domain.

Belongs to the NrdR family. Zn(2+) serves as cofactor.

Functionally, negatively regulates transcription of bacterial ribonucleotide reductase nrd genes and operons by binding to NrdR-boxes. This Neorickettsia sennetsu (strain ATCC VR-367 / Miyayama) (Ehrlichia sennetsu) protein is Transcriptional repressor NrdR.